The primary structure comprises 194 residues: Probable WRKY transcription factor 51 (194 aa).

The interval Ser58–Arg97 is disordered. The segment covering Ser76–His96 has biased composition (basic and acidic residues). Residues Ser104–Leu169 constitute a DNA-binding region (WRKY).

The protein belongs to the WRKY group II-c family. Interacts with CAMBP25/VQ15.

It is found in the nucleus. Functionally, transcription factor. Interacts specifically with the W box (5'-(T)TGAC[CT]-3'), a frequently occurring elicitor-responsive cis-acting element. Involved in defense responses. May act as positive regulator of salicylic acid (SA)-mediated signaling and negative regulator of jasmonic acid (JA)-mediated signaling. The protein is Probable WRKY transcription factor 51 (WRKY51) of Arabidopsis thaliana (Mouse-ear cress).